A 114-amino-acid chain; its full sequence is Large ribosomal subunit protein bL20c (114 aa).

This sequence belongs to the bacterial ribosomal protein bL20 family.

The protein resides in the plastid. The protein localises to the cyanelle. Functionally, binds directly to 23S ribosomal RNA and is necessary for the in vitro assembly process of the 50S ribosomal subunit. It is not involved in the protein synthesizing functions of that subunit. This Cyanophora paradoxa protein is Large ribosomal subunit protein bL20c (rpl20).